The primary structure comprises 224 residues: Imidazoleglycerol-phosphate dehydratase (224 aa).

The protein belongs to the imidazoleglycerol-phosphate dehydratase family.

The enzyme catalyses D-erythro-1-(imidazol-4-yl)glycerol 3-phosphate = 3-(imidazol-4-yl)-2-oxopropyl phosphate + H2O. It functions in the pathway amino-acid biosynthesis; L-histidine biosynthesis; L-histidine from 5-phospho-alpha-D-ribose 1-diphosphate: step 6/9. The polypeptide is Imidazoleglycerol-phosphate dehydratase (HIS3) (Cyberlindnera jadinii (Torula yeast)).